Consider the following 500-residue polypeptide: Cytochrome P450 2D15 (500 aa).

C446 contacts heme.

It belongs to the cytochrome P450 family. The cofactor is heme. In terms of tissue distribution, liver. Also detected in several other tissues.

It localises to the endoplasmic reticulum membrane. The protein localises to the microsome membrane. It carries out the reaction an organic molecule + reduced [NADPH--hemoprotein reductase] + O2 = an alcohol + oxidized [NADPH--hemoprotein reductase] + H2O + H(+). Its function is as follows. High activity for the hydroxylation of bunitrolol and imipramine; low activity on debrisoquine. This is Cytochrome P450 2D15 (CYP2D15) from Canis lupus familiaris (Dog).